The primary structure comprises 114 residues: T cell receptor beta variable 27 (114 aa).

A signal peptide spans 1-21 (MGPQLLGYVVLCLLGAGPLEA). The Ig-like domain maps to 22-114 (QVTQNPRYLI…TSLYFCASSL (93 aa)). C42 and C110 form a disulfide bridge. N-linked (GlcNAc...) asparagine glycosylation occurs at N103.

As to quaternary structure, alpha-beta TR is a heterodimer composed of an alpha and beta chain; disulfide-linked. The alpha-beta TR is associated with the transmembrane signaling CD3 coreceptor proteins to form the TR-CD3 (TcR or TCR). The assembly of alpha-beta TR heterodimers with CD3 occurs in the endoplasmic reticulum where a single alpha-beta TR heterodimer associates with one CD3D-CD3E heterodimer, one CD3G-CD3E heterodimer and one CD247 homodimer forming a stable octameric structure. CD3D-CD3E and CD3G-CD3E heterodimers preferentially associate with TR alpha and TR beta chains, respectively. The association of the CD247 homodimer is the last step of TcR assembly in the endoplasmic reticulum and is required for transport to the cell surface.

The protein localises to the cell membrane. Its function is as follows. V region of the variable domain of T cell receptor (TR) beta chain that participates in the antigen recognition. Alpha-beta T cell receptors are antigen specific receptors which are essential to the immune response and are present on the cell surface of T lymphocytes. Recognize peptide-major histocompatibility (MH) (pMH) complexes that are displayed by antigen presenting cells (APC), a prerequisite for efficient T cell adaptive immunity against pathogens. Binding of alpha-beta TR to pMH complex initiates TR-CD3 clustering on the cell surface and intracellular activation of LCK that phosphorylates the ITAM motifs of CD3G, CD3D, CD3E and CD247 enabling the recruitment of ZAP70. In turn ZAP70 phosphorylates LAT, which recruits numerous signaling molecules to form the LAT signalosome. The LAT signalosome propagates signal branching to three major signaling pathways, the calcium, the mitogen-activated protein kinase (MAPK) kinase and the nuclear factor NF-kappa-B (NF-kB) pathways, leading to the mobilization of transcription factors that are critical for gene expression and essential for T cell growth and differentiation. The T cell repertoire is generated in the thymus, by V-(D)-J rearrangement. This repertoire is then shaped by intrathymic selection events to generate a peripheral T cell pool of self-MH restricted, non-autoaggressive T cells. Post-thymic interaction of alpha-beta TR with the pMH complexes shapes TR structural and functional avidity. This is T cell receptor beta variable 27 from Homo sapiens (Human).